A 552-amino-acid polypeptide reads, in one-letter code: uncharacterized protein (552 aa).

In terms of domain architecture, DhaL spans 8-200 (KLFADMIIQG…LLCVYEGFLK (193 aa)).

This is an uncharacterized protein from Staphylococcus epidermidis (strain ATCC 12228 / FDA PCI 1200).